The primary structure comprises 268 residues: Thymidylate synthase (268 aa).

DUMP contacts are provided by residues Arg26 and 131–132; that span reads RR. Residue Cys151 is the Nucleophile of the active site. Residues 171–174, Asn182, and 212–214 each bind dUMP; these read RSAD and HIY. Position 174 (Asp174) interacts with (6R)-5,10-methylene-5,6,7,8-tetrahydrofolate. Residue Ser267 participates in (6R)-5,10-methylene-5,6,7,8-tetrahydrofolate binding.

This sequence belongs to the thymidylate synthase family. Bacterial-type ThyA subfamily. Homodimer.

Its subcellular location is the cytoplasm. The catalysed reaction is dUMP + (6R)-5,10-methylene-5,6,7,8-tetrahydrofolate = 7,8-dihydrofolate + dTMP. The protein operates within pyrimidine metabolism; dTTP biosynthesis. Catalyzes the reductive methylation of 2'-deoxyuridine-5'-monophosphate (dUMP) to 2'-deoxythymidine-5'-monophosphate (dTMP) while utilizing 5,10-methylenetetrahydrofolate (mTHF) as the methyl donor and reductant in the reaction, yielding dihydrofolate (DHF) as a by-product. This enzymatic reaction provides an intracellular de novo source of dTMP, an essential precursor for DNA biosynthesis. This chain is Thymidylate synthase, found in Corynebacterium aurimucosum (strain ATCC 700975 / DSM 44827 / CIP 107346 / CN-1) (Corynebacterium nigricans).